Reading from the N-terminus, the 141-residue chain is Nucleoside diphosphate kinase (141 aa).

Residues Lys9, Phe57, Arg85, Thr91, Arg102, and Asn112 each coordinate ATP. The Pros-phosphohistidine intermediate role is filled by His115.

It belongs to the NDK family. In terms of assembly, homotetramer. It depends on Mg(2+) as a cofactor.

The protein localises to the cytoplasm. The enzyme catalyses a 2'-deoxyribonucleoside 5'-diphosphate + ATP = a 2'-deoxyribonucleoside 5'-triphosphate + ADP. It carries out the reaction a ribonucleoside 5'-diphosphate + ATP = a ribonucleoside 5'-triphosphate + ADP. Major role in the synthesis of nucleoside triphosphates other than ATP. The ATP gamma phosphate is transferred to the NDP beta phosphate via a ping-pong mechanism, using a phosphorylated active-site intermediate. The protein is Nucleoside diphosphate kinase of Chloroherpeton thalassium (strain ATCC 35110 / GB-78).